A 320-amino-acid chain; its full sequence is Cytochrome f (320 aa).

The first 35 residues, 1–35, serve as a signal peptide directing secretion; sequence MQTRNAFSWLKKQITRSISVSLMIYILTRTSISSA. Residues tyrosine 36, cysteine 56, cysteine 59, and histidine 60 each coordinate heme. The helical transmembrane segment at 286 to 306 threads the bilayer; that stretch reads VQGLLFFLASVILAQIFLVLK.

The protein belongs to the cytochrome f family. As to quaternary structure, the 4 large subunits of the cytochrome b6-f complex are cytochrome b6, subunit IV (17 kDa polypeptide, petD), cytochrome f and the Rieske protein, while the 4 small subunits are PetG, PetL, PetM and PetN. The complex functions as a dimer. Heme serves as cofactor.

The protein resides in the plastid. The protein localises to the chloroplast thylakoid membrane. Component of the cytochrome b6-f complex, which mediates electron transfer between photosystem II (PSII) and photosystem I (PSI), cyclic electron flow around PSI, and state transitions. This Solanum bulbocastanum (Wild potato) protein is Cytochrome f.